The following is a 218-amino-acid chain: 7-cyano-7-deazaguanine synthase 1 (218 aa).

ATP is bound at residue Tyr9 to Leu19. The Zn(2+) site is built by Cys185, Cys193, Cys196, and Cys199.

Belongs to the QueC family. Zn(2+) serves as cofactor.

The catalysed reaction is 7-carboxy-7-deazaguanine + NH4(+) + ATP = 7-cyano-7-deazaguanine + ADP + phosphate + H2O + H(+). It participates in purine metabolism; 7-cyano-7-deazaguanine biosynthesis. Its function is as follows. Catalyzes the ATP-dependent conversion of 7-carboxy-7-deazaguanine (CDG) to 7-cyano-7-deazaguanine (preQ(0)). This is 7-cyano-7-deazaguanine synthase 1 from Colwellia psychrerythraea (strain 34H / ATCC BAA-681) (Vibrio psychroerythus).